The chain runs to 185 residues: MINEIKTDAQTRMDKCVESTKTQMAKVRTGRAHPSLLDTIQVPYYGSLTPLKQVASVSIGDARTLNVSVFDRTMIAAVEKAIMSSDLGLNPMSAGATIRIPLPALTEERRKDLIKVVRAEAENGRIAVRNVRRDANSDVKALEKEKECTEDDVRRTEDEVQKFTDAHIKKIDEILAAKEKELMEF.

Belongs to the RRF family.

Its subcellular location is the cytoplasm. Responsible for the release of ribosomes from messenger RNA at the termination of protein biosynthesis. May increase the efficiency of translation by recycling ribosomes from one round of translation to another. The chain is Ribosome-recycling factor from Shewanella piezotolerans (strain WP3 / JCM 13877).